We begin with the raw amino-acid sequence, 33 residues long: Photosystem II reaction center protein Psb30 (33 aa).

Residues 5–25 (VIAQLTVLALIVISGPLVIAL) form a helical membrane-spanning segment.

It belongs to the Psb30/Ycf12 family. In terms of assembly, PSII is composed of 1 copy each of membrane proteins PsbA, PsbB, PsbC, PsbD, PsbE, PsbF, PsbH, PsbI, PsbJ, PsbK, PsbL, PsbM, PsbT, PsbX, PsbY, PsbZ, Psb30/Ycf12, peripheral proteins of the oxygen-evolving complex and a large number of cofactors. It forms dimeric complexes.

It is found in the plastid. Its subcellular location is the chloroplast thylakoid membrane. Functionally, a core subunit of photosystem II (PSII), probably helps stabilize the reaction center. The chain is Photosystem II reaction center protein Psb30 from Huperzia lucidula (Shining clubmoss).